The primary structure comprises 595 residues: MEKSGGIREESSEKTFSDFNLDPRLQRAIHKCEFEKPTSVQSETIPLALEGKDLVAQARTGSGKTAAYLIPILELLLKQKQIDENQRGIFALLLVPTRELAQQVYNVLEKLTAFCSKHIRFINVATNSSDTVQRPLLLDLPDIVIATPSRCVVHVASGVLPLDKLKFLVIDEADLMLSFGYNEDMKTLSRSLPRGTQSFLMSATLSKNIASLQKLVCRNPFILAVKDKEASGKLTQYVVKCSEQDKFLLAYILLKLRLIKGKILIFVNEINRCYRLKLFLEQFGLKSLVLNSELPVNSRLHILEQYNKGLYQIIIATDESGMMGEIEELENNVDFVEEEVISTDQPTLDKMKDQENADVNDESILAAAKDKSKKKKRVKQDKEYGVARGLDFENVACVLNFDMPSNTKSYIHRIGRTARAGKPGTAMSFVVPKSEVGKHKPTSLESCKKDESVLRRLEKKQISLQPYSFDKNQIDAFRYRMEDALRAVTTVAVSAARAAELKQELLISEKLKSYFAENPDELLSLTHDTVSSVRLGHTQRHLRHVPEYLLPKGMQAVNKDIGFVPFKKNNRRKVFKSRKNPKHRHDPLRSMKRKS.

Positions 14–42 (KTFSDFNLDPRLQRAIHKCEFEKPTSVQS) match the Q motif motif. The Helicase ATP-binding domain maps to 45–223 (IPLALEGKDL…KLVCRNPFIL (179 aa)). Position 58 to 65 (58 to 65 (ARTGSGKT)) interacts with ATP. The DEAD box signature appears at 171 to 174 (DEAD). Residues 233 to 485 (KLTQYVVKCS…AFRYRMEDAL (253 aa)) form the Helicase C-terminal domain. The interval 574–595 (VFKSRKNPKHRHDPLRSMKRKS) is disordered.

This sequence belongs to the DEAD box helicase family. DDX56/DBP9 subfamily.

The protein resides in the nucleus. It is found in the nucleolus. It carries out the reaction ATP + H2O = ADP + phosphate + H(+). In terms of biological role, ATP-binding RNA helicase involved in the biogenesis of 60S ribosomal subunits and is required for the normal formation of 25S and 5.8S rRNAs. This Schizosaccharomyces pombe (strain 972 / ATCC 24843) (Fission yeast) protein is ATP-dependent RNA helicase dbp9 (dbp9).